The primary structure comprises 464 residues: Signal recognition particle 54 kDa protein (464 aa).

Residues 104–111, 184–188, and 242–245 contribute to the GTP site; these read GLQGSGKT, DTAGR, and TKLD.

This sequence belongs to the GTP-binding SRP family. SRP54 subfamily. As to quaternary structure, part of the signal recognition particle protein translocation system, which is composed of SRP and FtsY. Archaeal SRP consists of a 7S RNA molecule of 300 nucleotides and two protein subunits: SRP54 and SRP19.

It is found in the cytoplasm. It catalyses the reaction GTP + H2O = GDP + phosphate + H(+). Its function is as follows. Involved in targeting and insertion of nascent membrane proteins into the cytoplasmic membrane. Binds to the hydrophobic signal sequence of the ribosome-nascent chain (RNC) as it emerges from the ribosomes. The SRP-RNC complex is then targeted to the cytoplasmic membrane where it interacts with the SRP receptor FtsY. This chain is Signal recognition particle 54 kDa protein, found in Halorubrum lacusprofundi (strain ATCC 49239 / DSM 5036 / JCM 8891 / ACAM 34).